The chain runs to 244 residues: Acidic leucine-rich nuclear phosphoprotein 32 family member A (244 aa).

4 LRR repeats span residues 18–41, 43–64, 65–87, and 89–110; these read DVKE…TDEF, GLEF…PKLN, KLKK…AEKC, and NLTH…EPLK. Residues 123–161 form the LRRCT domain; that stretch reads CEVTNLNDYRENLFKLLPQLTYLDGYDRDDKEAPDSDAE. The interval 148–244 is disordered; it reads YDRDDKEAPD…DQDDEGEDDD (97 aa). Residues 157 to 227 are compositionally biased toward acidic residues; that stretch reads DSDAEGYVEG…EEDEGDEEAE (71 aa).

The protein belongs to the ANP32 family. Phosphorylated on serine residues.

It is found in the nucleus. Its subcellular location is the cytoplasm. The protein localises to the endoplasmic reticulum. Its function is as follows. Implicated in a number of cellular processes, including proliferation, differentiation, caspase-dependent and caspase-independent apoptosis, suppression of transformation (tumor suppressor), inhibition of protein phosphatase 2A, regulation of mRNA trafficking and stability, and inhibition of acetyltransferases as part of the INHAT (inhibitor of histone acetyltransferases) complex. This chain is Acidic leucine-rich nuclear phosphoprotein 32 family member A (anp32a), found in Xenopus laevis (African clawed frog).